We begin with the raw amino-acid sequence, 202 residues long: N-(5'-phosphoribosyl)anthranilate isomerase (202 aa).

The protein belongs to the TrpF family.

The enzyme catalyses N-(5-phospho-beta-D-ribosyl)anthranilate = 1-(2-carboxyphenylamino)-1-deoxy-D-ribulose 5-phosphate. The protein operates within amino-acid biosynthesis; L-tryptophan biosynthesis; L-tryptophan from chorismate: step 3/5. The sequence is that of N-(5'-phosphoribosyl)anthranilate isomerase from Bacillus cereus (strain ATCC 14579 / DSM 31 / CCUG 7414 / JCM 2152 / NBRC 15305 / NCIMB 9373 / NCTC 2599 / NRRL B-3711).